The sequence spans 295 residues: Bifunctional protein FolD (295 aa).

Residues 163-165, S188, and I229 each bind NADP(+); that span reads GRS.

Belongs to the tetrahydrofolate dehydrogenase/cyclohydrolase family. Homodimer.

It carries out the reaction (6R)-5,10-methylene-5,6,7,8-tetrahydrofolate + NADP(+) = (6R)-5,10-methenyltetrahydrofolate + NADPH. It catalyses the reaction (6R)-5,10-methenyltetrahydrofolate + H2O = (6R)-10-formyltetrahydrofolate + H(+). It functions in the pathway one-carbon metabolism; tetrahydrofolate interconversion. Functionally, catalyzes the oxidation of 5,10-methylenetetrahydrofolate to 5,10-methenyltetrahydrofolate and then the hydrolysis of 5,10-methenyltetrahydrofolate to 10-formyltetrahydrofolate. This chain is Bifunctional protein FolD, found in Hyphomonas neptunium (strain ATCC 15444).